Here is a 426-residue protein sequence, read N- to C-terminus: DNA polymerase processivity factor component OPG148 (426 aa).

It belongs to the orthopoxvirus OPG148 family. As to quaternary structure, interacts with the DNA polymerase catalytic subunit OPG071. Interacts with UDG/OPG116. Component of the uracil-DNA glycosylase(UDG)-OPG148-polymerase complex; OPG148 and UDG form a heterodimeric processivity factor that associates with OPG071 to form the processive polymerase holoenzyme. Interacts with OPG117.

In terms of biological role, plays an essential role in viral DNA replication by acting as the polymerase processivity factor together with protein OPG116. Serves as a bridge which links the DNA polymerase OPG071 and the uracil DNA glycosylase. The chain is DNA polymerase processivity factor component OPG148 (OPG148) from Variola virus (isolate Human/India/Ind3/1967) (VARV).